A 147-amino-acid chain; its full sequence is Hemoglobin subunit beta (147 aa).

N-acetylvaline is present on Val-2. Residues 3 to 147 form the Globin domain; that stretch reads NLTSDEKTAV…VANALAHKYH (145 aa). Position 45 is a phosphoserine (Ser-45). Position 60 is an N6-acetyllysine (Lys-60). Position 64 (His-64) interacts with heme b. Lys-83 carries the post-translational modification N6-acetyllysine. His-93 contacts heme b. Cys-94 carries the post-translational modification S-nitrosocysteine. Lys-145 carries the N6-acetyllysine modification.

This sequence belongs to the globin family. As to quaternary structure, heterotetramer of two alpha chains and two beta chains. In terms of tissue distribution, red blood cells.

Functionally, involved in oxygen transport from the lung to the various peripheral tissues. The polypeptide is Hemoglobin subunit beta (HBB) (Dasypus novemcinctus (Nine-banded armadillo)).